The primary structure comprises 94 residues: Pyrimidine/purine nucleoside phosphorylase (94 aa).

It belongs to the nucleoside phosphorylase PpnP family.

It catalyses the reaction a purine D-ribonucleoside + phosphate = a purine nucleobase + alpha-D-ribose 1-phosphate. The enzyme catalyses adenosine + phosphate = alpha-D-ribose 1-phosphate + adenine. It carries out the reaction cytidine + phosphate = cytosine + alpha-D-ribose 1-phosphate. The catalysed reaction is guanosine + phosphate = alpha-D-ribose 1-phosphate + guanine. It catalyses the reaction inosine + phosphate = alpha-D-ribose 1-phosphate + hypoxanthine. The enzyme catalyses thymidine + phosphate = 2-deoxy-alpha-D-ribose 1-phosphate + thymine. It carries out the reaction uridine + phosphate = alpha-D-ribose 1-phosphate + uracil. The catalysed reaction is xanthosine + phosphate = alpha-D-ribose 1-phosphate + xanthine. Its function is as follows. Catalyzes the phosphorolysis of diverse nucleosides, yielding D-ribose 1-phosphate and the respective free bases. Can use uridine, adenosine, guanosine, cytidine, thymidine, inosine and xanthosine as substrates. Also catalyzes the reverse reactions. The polypeptide is Pyrimidine/purine nucleoside phosphorylase (Vibrio campbellii (strain ATCC BAA-1116)).